The chain runs to 782 residues: DnaJ homolog subfamily C member 16 (782 aa).

Residues 1–25 (MEVRKLSISWQFLIVLVLILQILSA) form the signal peptide. Over 26 to 535 (LDFDPYKVLG…DSIFHNNWRE (510 aa)) the chain is Cytoplasmic. In terms of domain architecture, J spans 29–93 (DPYKVLGVSR…EKRSNYDQYG (65 aa)). In terms of domain architecture, Thioredoxin spans 119-247 (FYFDESFFHF…LRQFVESLLP (129 aa)). Residues 536–556 (MMPLLSLIFSALFILFGTVIV) form a helical; Anchor for type IV membrane protein membrane-spanning segment. The Extracellular segment spans residues 557–782 (QAFSDSSDER…FYIPSWPELD (226 aa)). Residues 562 to 593 (SSDERESSPPDKEEAQEKTGKTEPSFTKENSS) are disordered. The segment covering 563 to 582 (SDERESSPPDKEEAQEKTGK) has biased composition (basic and acidic residues). A compositionally biased stretch (polar residues) spans 583–593 (TEPSFTKENSS). N-linked (GlcNAc...) asparagine glycosylation occurs at Asn631.

It is found in the endoplasmic reticulum membrane. Functionally, plays an important role in regulating the size of autophagosomes during the formation process. This is DnaJ homolog subfamily C member 16 (DNAJC16) from Pongo abelii (Sumatran orangutan).